The following is a 74-amino-acid chain: Exodeoxyribonuclease 7 small subunit (74 aa).

Belongs to the XseB family. Heterooligomer composed of large and small subunits.

The protein resides in the cytoplasm. It catalyses the reaction Exonucleolytic cleavage in either 5'- to 3'- or 3'- to 5'-direction to yield nucleoside 5'-phosphates.. Bidirectionally degrades single-stranded DNA into large acid-insoluble oligonucleotides, which are then degraded further into small acid-soluble oligonucleotides. This Actinobacillus pleuropneumoniae serotype 5b (strain L20) protein is Exodeoxyribonuclease 7 small subunit.